Consider the following 156-residue polypeptide: ATP synthase subunit b (156 aa).

Residues Leu5–Val25 form a helical membrane-spanning segment.

It belongs to the ATPase B chain family. F-type ATPases have 2 components, F(1) - the catalytic core - and F(0) - the membrane proton channel. F(1) has five subunits: alpha(3), beta(3), gamma(1), delta(1), epsilon(1). F(0) has three main subunits: a(1), b(2) and c(10-14). The alpha and beta chains form an alternating ring which encloses part of the gamma chain. F(1) is attached to F(0) by a central stalk formed by the gamma and epsilon chains, while a peripheral stalk is formed by the delta and b chains.

It is found in the cell inner membrane. Its function is as follows. F(1)F(0) ATP synthase produces ATP from ADP in the presence of a proton or sodium gradient. F-type ATPases consist of two structural domains, F(1) containing the extramembraneous catalytic core and F(0) containing the membrane proton channel, linked together by a central stalk and a peripheral stalk. During catalysis, ATP synthesis in the catalytic domain of F(1) is coupled via a rotary mechanism of the central stalk subunits to proton translocation. Functionally, component of the F(0) channel, it forms part of the peripheral stalk, linking F(1) to F(0). This is ATP synthase subunit b from Chromohalobacter salexigens (strain ATCC BAA-138 / DSM 3043 / CIP 106854 / NCIMB 13768 / 1H11).